A 151-amino-acid chain; its full sequence is Large ribosomal subunit protein bL9 (151 aa).

This sequence belongs to the bacterial ribosomal protein bL9 family.

Functionally, binds to the 23S rRNA. In Desulfosudis oleivorans (strain DSM 6200 / JCM 39069 / Hxd3) (Desulfococcus oleovorans), this protein is Large ribosomal subunit protein bL9.